The primary structure comprises 162 residues: Regulator of sigma D (162 aa).

This sequence belongs to the Rsd/AlgQ family. In terms of assembly, interacts with RpoD.

The protein resides in the cytoplasm. In terms of biological role, binds RpoD and negatively regulates RpoD-mediated transcription activation by preventing the interaction between the primary sigma factor RpoD with the catalytic core of the RNA polymerase and with promoter DNA. May be involved in replacement of the RNA polymerase sigma subunit from RpoD to RpoS during the transition from exponential growth to the stationary phase. This Salmonella agona (strain SL483) protein is Regulator of sigma D.